We begin with the raw amino-acid sequence, 295 residues long: MEDQASAQLLGPVEIRQLAEKLDVTPTKKLGQNFVHDPNTVRMIVSAADLNSDDHVIEVGPGLGSLTLALLDTAQKVTAVEIDPRLAQQLPLTVAERAGQFADRLNLIHKDALTVAPDDIDHPTALVANLPYNVSVPVLLHLLQIFPTIRRVLVMVQAEVADRLAADPGNKVYGVPSVKASFYGNVRRAGSIGKNVFWPAPKIESGLVRIDVFDPEHQPWPVTDDMRKAVFPLIDSAFAQRRKTLRAALSGHFGSGPAAEEALRTAGIDPILRGEKLDIADFVRLARVTAAQEQA.

Residues asparagine 33, valine 35, glycine 60, glutamate 81, aspartate 111, and asparagine 129 each contribute to the S-adenosyl-L-methionine site.

It belongs to the class I-like SAM-binding methyltransferase superfamily. rRNA adenine N(6)-methyltransferase family. RsmA subfamily.

It localises to the cytoplasm. It carries out the reaction adenosine(1518)/adenosine(1519) in 16S rRNA + 4 S-adenosyl-L-methionine = N(6)-dimethyladenosine(1518)/N(6)-dimethyladenosine(1519) in 16S rRNA + 4 S-adenosyl-L-homocysteine + 4 H(+). Functionally, specifically dimethylates two adjacent adenosines (A1518 and A1519) in the loop of a conserved hairpin near the 3'-end of 16S rRNA in the 30S particle. May play a critical role in biogenesis of 30S subunits. In Corynebacterium diphtheriae (strain ATCC 700971 / NCTC 13129 / Biotype gravis), this protein is Ribosomal RNA small subunit methyltransferase A.